A 219-amino-acid chain; its full sequence is Ras-related protein Rab-3B (219 aa).

An N-acetylalanine modification is found at alanine 2. GTP-binding residues include serine 31, serine 32, valine 33, glycine 34, lysine 35, threonine 36, serine 37, proline 49, and serine 53. Threonine 36 is a binding site for Mg(2+). The Switch 1 signature appears at 45-58 (DTFTPAFVSTVGID). 2 residues coordinate Mg(2+): threonine 54 and aspartate 77. The Switch 2 motif lies at 78–96 (TAGQERYRTITTAYYRGAM). Residue glycine 80 participates in GTP binding. Threonine 86 is modified (phosphothreonine). Residues asparagine 135, lysine 136, aspartate 138, alanine 166, and lysine 167 each coordinate GTP. A Phosphoserine modification is found at serine 188. 2 S-geranylgeranyl cysteine lipidation sites follow: cysteine 217 and cysteine 219. Cysteine 219 bears the Cysteine methyl ester mark.

Belongs to the small GTPase superfamily. Rab family. As to quaternary structure, interacts with RIMS1, RIMS2, RPH3A and RPH3AL. The GTP-bound form interacts with GAS8/DRC4 (via coiled-coil domains). Interacts with GDI2, CHM and CHML; phosphorylation at Thr-86 disrupts these interactions. Interacts with MADD (via uDENN domain); the GTP-bound form is preferred for interaction. Mg(2+) serves as cofactor. Phosphorylation of Thr-86 in the switch II region by LRRK2 prevents the association of RAB regulatory proteins, including CHM, CHML and RAB GDP dissociation inhibitor GDI2.

The protein resides in the cell membrane. It is found in the golgi apparatus. The catalysed reaction is GTP + H2O = GDP + phosphate + H(+). Regulated by guanine nucleotide exchange factors (GEFs) which promote the exchange of bound GDP for free GTP. Regulated by GTPase activating proteins (GAPs) which increase the GTP hydrolysis activity. Inhibited by GDP dissociation inhibitors (GDIs) which prevent Rab-GDP dissociation. Its function is as follows. The small GTPases Rab are key regulators of intracellular membrane trafficking, from the formation of transport vesicles to their fusion with membranes. Rabs cycle between an inactive GDP-bound form and an active GTP-bound form that is able to recruit to membranes different sets of downstream effectors directly responsible for vesicle formation, movement, tethering and fusion. The sequence is that of Ras-related protein Rab-3B (RAB3B) from Bos taurus (Bovine).